The sequence spans 356 residues: tRNA N6-adenosine threonylcarbamoyltransferase (356 aa).

The Fe cation site is built by histidine 115 and histidine 119. Residues 138 to 142, aspartate 171, glycine 184, and asparagine 283 each bind substrate; that span reads LVSGG. Aspartate 311 is a Fe cation binding site.

Belongs to the KAE1 / TsaD family. Fe(2+) serves as cofactor.

Its subcellular location is the cytoplasm. The enzyme catalyses L-threonylcarbamoyladenylate + adenosine(37) in tRNA = N(6)-L-threonylcarbamoyladenosine(37) in tRNA + AMP + H(+). In terms of biological role, required for the formation of a threonylcarbamoyl group on adenosine at position 37 (t(6)A37) in tRNAs that read codons beginning with adenine. Is involved in the transfer of the threonylcarbamoyl moiety of threonylcarbamoyl-AMP (TC-AMP) to the N6 group of A37, together with TsaE and TsaB. TsaD likely plays a direct catalytic role in this reaction. This Prochlorococcus marinus (strain AS9601) protein is tRNA N6-adenosine threonylcarbamoyltransferase.